Consider the following 206-residue polypeptide: Transcription factor BTF3 (206 aa).

Residues Met1–Glu42 form a disordered region. Arg19 is subject to Omega-N-methylarginine. Phosphoserine is present on Ser30. Residues Lys46 and Lys54 each carry the N6-methyllysine modification. The NAC-A/B domain occupies Thr82–Leu147. At Thr160 the chain carries Phosphothreonine. A disordered region spans residues Pro170–Asn206. At Ser173 the chain carries Phosphoserine. Residues Gly183 to Asp198 show a composition bias toward acidic residues.

Belongs to the NAC-beta family. As to quaternary structure, part of the nascent polypeptide-associated complex (NAC), which is a heterodimer of NACA and BTF3 (via NAC-A/B domains). NAC associates with ribosomes through the BTF3/NACB subunit. Both subunits can contact nascent polypeptide chains.

Its subcellular location is the cytoplasm. The protein localises to the nucleus. Functionally, when associated with NACA, prevents inappropriate targeting of non-secretory polypeptides to the endoplasmic reticulum (ER). Binds to nascent polypeptide chains as they emerge from the ribosome and blocks their interaction with the signal recognition particle (SRP), which normally targets nascent secretory peptides to the ER. BTF3 is also a general transcription factor that can form a stable complex with RNA polymerase II. Required for the initiation of transcription. This is Transcription factor BTF3 (BTF3) from Homo sapiens (Human).